The primary structure comprises 233 residues: Small ribosomal subunit protein uS2c (233 aa).

Belongs to the universal ribosomal protein uS2 family.

It is found in the plastid. The protein localises to the apicoplast. The polypeptide is Small ribosomal subunit protein uS2c (Toxoplasma gondii).